The following is a 605-amino-acid chain: Beta-hexosaminidase ARB_07893 (605 aa).

Residues Met1–Ala18 form the signal peptide. The N-linked (GlcNAc...) asparagine glycan is linked to Asn30. Glu293 functions as the Nucleophile in the catalytic mechanism. Asn342 carries an N-linked (GlcNAc...) asparagine glycan. Glu374 acts as the Proton donor in catalysis. N-linked (GlcNAc...) asparagine glycosylation occurs at Asn449.

It belongs to the glycosyl hydrolase 20 family.

Its subcellular location is the secreted. The catalysed reaction is Hydrolysis of terminal non-reducing N-acetyl-D-hexosamine residues in N-acetyl-beta-D-hexosaminides.. In terms of biological role, beta-hexosaminidase that shows a broad substrate specificity. The sequence is that of Beta-hexosaminidase ARB_07893 from Arthroderma benhamiae (strain ATCC MYA-4681 / CBS 112371) (Trichophyton mentagrophytes).